Here is a 181-residue protein sequence, read N- to C-terminus: Putative ankyrin repeat protein RBE_0150 (181 aa).

ANK repeat units follow at residues 50–79, 83–114, 118–147, and 151–180; these read IGQK…KLGT, LGRT…DINA, SGST…DYFT, and LGQT…AGYY.

In Rickettsia bellii (strain RML369-C), this protein is Putative ankyrin repeat protein RBE_0150.